The following is a 268-amino-acid chain: Tryptophan synthase alpha chain (268 aa).

Catalysis depends on proton acceptor residues Glu49 and Asp60.

It belongs to the TrpA family. In terms of assembly, tetramer of two alpha and two beta chains.

It carries out the reaction (1S,2R)-1-C-(indol-3-yl)glycerol 3-phosphate + L-serine = D-glyceraldehyde 3-phosphate + L-tryptophan + H2O. It participates in amino-acid biosynthesis; L-tryptophan biosynthesis; L-tryptophan from chorismate: step 5/5. In terms of biological role, the alpha subunit is responsible for the aldol cleavage of indoleglycerol phosphate to indole and glyceraldehyde 3-phosphate. The chain is Tryptophan synthase alpha chain from Escherichia coli O127:H6 (strain E2348/69 / EPEC).